Consider the following 998-residue polypeptide: Protein Smaug (998 aa).

Over residues 1-37 the composition is skewed to polar residues; sequence MKYATGTDNAMTSGISGQTNNSNSASNEMQPTTSTPT. Disordered regions lie at residues 1 to 45, 50 to 69, and 329 to 370; these read MKYA…EATS, TATY…QSQP, and LCPA…GSSS. Low complexity predominate over residues 329–338; that stretch reads LCPASGSRSS. Phosphoserine occurs at positions 564 and 575. An interaction with cup region spans residues 583-763; sequence EFKPNYIKFH…KDLKFKLSKM (181 aa). In terms of domain architecture, SAM spans 600–654; it reads GIGLWLKSLRLHKYIELFKNMTYEEMLLITEDFLQSVGVTKGASHKLALCIDKLK. 2 disordered regions span residues 773-892 and 942-977; these read HVKP…MQQM and NNGS…QQPK. Polar residues-rich tracts occupy residues 801-822 and 854-864; these read KSGS…NFSL and HQPQYKSSSYP. The residue at position 971 (serine 971) is a Phosphoserine.

This sequence belongs to the SMAUG family. Interacts with oskar (osk). Binds to the 3'-UTR of nos. Interacts with cup, which in turn recruits eIF4-E, leading to an indirect interaction between smg and eIF4-E that prevents mRNA translation.

Its subcellular location is the cytoplasm. Functionally, translation regulator that binds to the 3'-UTR of specific mRNAs such as nanos (nos) and prevent their translation. Prevents translation of unlocalized nos in the bulk cytoplasm via the recruitment of cup. The sequence is that of Protein Smaug from Drosophila simulans (Fruit fly).